Here is a 531-residue protein sequence, read N- to C-terminus: Cation transporter HKT1;3 (531 aa).

The Cytoplasmic portion of the chain corresponds to 1–46; sequence MNHCLVVSHKKLQTFRTFAASKFSSFTKSAQKSIKYSFQFIYQNNP. 2 helical membrane passes run 47–67 and 108–128; these read LFVH…SLKV and LWVL…MLGI. The Cytoplasmic portion of the chain corresponds to 129–190; sequence HFMRAEFGTK…GGHVEPKTIK (62 aa). Helical transmembrane passes span 191–211 and 264–284; these read FLGF…SLLI and ILLL…APCL. The Cytoplasmic portion of the chain corresponds to 285–321; the sequence is RLMVWSLEKITGKKDCRYILEYPKAIGYKHLMSTRES. The next 2 membrane-spanning stretches (helical) occupy residues 322–342 and 383–403; these read VYLT…FLSL and SAIL…SFLP. At 404 to 421 the chain is on the cytoplasmic side; the sequence is RHDGEDSKTEKINKRKGL. Transmembrane regions (helical) follow at residues 422 to 442 and 494 to 514; these read LENW…LICI and YGFA…VMLF. Over 515-530 the chain is Cytoplasmic; sequence GRLKTFNMKGGRAWKL.

Belongs to the TrkH potassium transport family. HKT (TC 2.A.38.3) subfamily. As to quaternary structure, interacts with CNIH1. Weakly expressed. In roots, expressed in epidermis, exodermis, cortex, and sieve elements and companion cells of phloem. In mature leaves, expressed in large highly vacuolated cells of the adaxial epidermis, phloem and xylem.

The protein localises to the endoplasmic reticulum membrane. It is found in the golgi apparatus membrane. It carries out the reaction Na(+)(in) = Na(+)(out). Functionally, functions as a highly-selective sodium transporter. Does not seem to function as sodium-potassium cotransporter. May be involved in turgor changes for rolling and unrolling of leaves in response to environmental variations. This is Cation transporter HKT1;3 from Oryza sativa subsp. japonica (Rice).